The sequence spans 311 residues: tRNA dimethylallyltransferase (311 aa).

ATP is bound at residue 12 to 19 (GPTASGKT). 14-19 (TASGKT) serves as a coordination point for substrate. 2 interaction with substrate tRNA regions span residues 37–40 (DSAM) and 161–165 (QRIQR).

This sequence belongs to the IPP transferase family. As to quaternary structure, monomer. Mg(2+) is required as a cofactor.

It catalyses the reaction adenosine(37) in tRNA + dimethylallyl diphosphate = N(6)-dimethylallyladenosine(37) in tRNA + diphosphate. Its function is as follows. Catalyzes the transfer of a dimethylallyl group onto the adenine at position 37 in tRNAs that read codons beginning with uridine, leading to the formation of N6-(dimethylallyl)adenosine (i(6)A). In Coxiella burnetii (strain RSA 331 / Henzerling II), this protein is tRNA dimethylallyltransferase.